The chain runs to 328 residues: Methionyl-tRNA formyltransferase (328 aa).

(6S)-5,6,7,8-tetrahydrofolate is bound at residue 110 to 113 (SLLP).

It belongs to the Fmt family.

The catalysed reaction is L-methionyl-tRNA(fMet) + (6R)-10-formyltetrahydrofolate = N-formyl-L-methionyl-tRNA(fMet) + (6S)-5,6,7,8-tetrahydrofolate + H(+). Its function is as follows. Attaches a formyl group to the free amino group of methionyl-tRNA(fMet). The formyl group appears to play a dual role in the initiator identity of N-formylmethionyl-tRNA by promoting its recognition by IF2 and preventing the misappropriation of this tRNA by the elongation apparatus. The polypeptide is Methionyl-tRNA formyltransferase (Prochlorococcus marinus (strain AS9601)).